The following is a 146-amino-acid chain: Large-conductance mechanosensitive channel (146 aa).

3 helical membrane passes run 17–37 (IDLA…DSLV), 40–60 (IIMP…QKFV), and 89–109 (LTIL…VKLI).

Belongs to the MscL family. In terms of assembly, homopentamer.

It localises to the cell inner membrane. Functionally, channel that opens in response to stretch forces in the membrane lipid bilayer. May participate in the regulation of osmotic pressure changes within the cell. This chain is Large-conductance mechanosensitive channel, found in Acinetobacter baylyi (strain ATCC 33305 / BD413 / ADP1).